The following is a 555-amino-acid chain: Protein FAM234A (555 aa).

The span at 1–22 shows a compositional bias: basic and acidic residues; the sequence is MMDNKDLEAEIHPLKNEDKKSQ. The segment at 1-40 is disordered; it reads MMDNKDLEAEIHPLKNEDKKSQENPGNLPRNEDNLKSKPV. Topologically, residues 1-49 are cytoplasmic; the sequence is MMDNKDLEAEIHPLKNEDKKSQENPGNLPRNEDNLKSKPVPSRLSRCRT. Ser-21 carries the phosphoserine modification. A helical; Signal-anchor for type II membrane protein transmembrane segment spans residues 50–70; that stretch reads VAFFLSLFTCLFVVFVLSFII. Over 71–555 the chain is Extracellular; sequence PCPDRPSSQG…FSRLRYRSEM (485 aa). N-linked (GlcNAc...) asparagine glycosylation is found at Asn-116, Asn-120, Asn-317, Asn-392, and Asn-476.

It belongs to the FAM234 family.

The protein localises to the membrane. This is Protein FAM234A from Mus musculus (Mouse).